A 1091-amino-acid chain; its full sequence is ATP-dependent RNA helicase ddx54 (1091 aa).

2 disordered regions span residues 1–63 and 150–231; these read MVKP…KEEF and DNSN…KTGG. The segment covering 26 to 35 has biased composition (basic and acidic residues); the sequence is MKGKKLETKS. A compositionally biased stretch (polar residues) spans 150-161; that stretch reads DNSNFDNNGDQF. Over residues 196 to 207 the composition is skewed to basic and acidic residues; that stretch reads KKEEIESSEKFE. Residues 230-258 carry the Q motif motif; it reads GGFQSMDLTKNLLKAILKKGFNVPTPIQR. The 173-residue stretch at 261–433 folds into the Helicase ATP-binding domain; that stretch reads IPMILDGHDI…RAGLNNPKLI (173 aa). 274 to 281 lines the ATP pocket; the sequence is ARTGSGKT. The DEAD box signature appears at 381–384; the sequence is DEAD. A Helicase C-terminal domain is found at 478-632; that stretch reads TETTTTTTTN…KFQYEGQTIN (155 aa). Disordered regions lie at residues 801 to 896 and 933 to 1091; these read EEML…TPEN and KRKG…KSRK. Residues 814–823 are compositionally biased toward basic and acidic residues; that stretch reads DNNKDIKMNE. Positions 824 to 855 are enriched in acidic residues; it reads NDDENDDDDEEGENDDDEEEENEKDEDDEEDE. 3 stretches are compositionally biased toward basic and acidic residues: residues 865-874, 944-975, and 1008-1019; these read ESSDKNDNNK, DADR…EEWK, and QGREKEKKDNKA. A compositionally biased stretch (basic residues) spans 1020-1029; the sequence is SHAKGSHGLK. Residues 1031 to 1052 show a composition bias toward basic and acidic residues; sequence RPSELKDKNQISKNRSEKERKM. Over residues 1068-1079 the composition is skewed to gly residues; that stretch reads SGGGGGGKGSKF.

The protein belongs to the DEAD box helicase family. DDX54/DBP10 subfamily.

The protein resides in the nucleus. The protein localises to the nucleolus. It carries out the reaction ATP + H2O = ADP + phosphate + H(+). ATP-binding RNA helicase which may be involved in the ribosome biogenesis. This is ATP-dependent RNA helicase ddx54 (helA) from Dictyostelium discoideum (Social amoeba).